Consider the following 320-residue polypeptide: Cytochrome f (320 aa).

The first 35 residues, 1 to 35 (MQTKNTFSWIKKEIIRSISVSLMIYIIARTSISNA), serve as a signal peptide directing secretion. The heme site is built by Y36, C56, C59, and H60. A helical membrane pass occupies residues 286–306 (VQGLLFFLASVILAQIFLVLK).

The protein belongs to the cytochrome f family. As to quaternary structure, the 4 large subunits of the cytochrome b6-f complex are cytochrome b6, subunit IV (17 kDa polypeptide, petD), cytochrome f and the Rieske protein, while the 4 small subunits are PetG, PetL, PetM and PetN. The complex functions as a dimer. The cofactor is heme.

The protein localises to the plastid. Its subcellular location is the chloroplast thylakoid membrane. Component of the cytochrome b6-f complex, which mediates electron transfer between photosystem II (PSII) and photosystem I (PSI), cyclic electron flow around PSI, and state transitions. This Eucalyptus globulus subsp. globulus (Tasmanian blue gum) protein is Cytochrome f.